The sequence spans 607 residues: Arginine--tRNA ligase, cytoplasmic (607 aa).

Alanine 2 carries the post-translational modification N-acetylalanine. Residue serine 15 is modified to Phosphoserine. Interaction with tRNA stretches follow at residues 59–60 (EW) and 106–111 (NGPFIQ). L-arginine contacts are provided by residues 148 to 153 (EFSSPN), histidine 162, tyrosine 347, aspartate 351, and glutamine 375. The 'HIGH' region signature appears at 151–162 (SPNIAKPFHAGH). The segment at 484-498 (DTGPYLQYAHSRLRS) is interaction with tRNA.

It belongs to the class-I aminoacyl-tRNA synthetase family. As to quaternary structure, monomer.

It is found in the cytoplasm. The protein resides in the cytosol. It carries out the reaction tRNA(Arg) + L-arginine + ATP = L-arginyl-tRNA(Arg) + AMP + diphosphate. Its function is as follows. Forms part of a macromolecular complex that catalyzes the attachment of specific amino acids to cognate tRNAs during protein synthesis. This chain is Arginine--tRNA ligase, cytoplasmic, found in Saccharomyces cerevisiae (strain ATCC 204508 / S288c) (Baker's yeast).